Consider the following 404-residue polypeptide: Homocysteine-responsive endoplasmic reticulum-resident ubiquitin-like domain member 2 protein (404 aa).

The 80-residue stretch at V10–R89 folds into the Ubiquitin-like domain. The disordered stretch occupies residues C86–A153. Composition is skewed to low complexity over residues S88–S97 and S109–S126. Positions Q127–A153 are enriched in polar residues. The helical transmembrane segment at F301–F321 threads the bilayer.

The protein resides in the membrane. Could be involved in the unfolded protein response (UPR) pathway. This Mus musculus (Mouse) protein is Homocysteine-responsive endoplasmic reticulum-resident ubiquitin-like domain member 2 protein (Herpud2).